A 459-amino-acid polypeptide reads, in one-letter code: Glycosyl hydrolase family 109 protein 1 (459 aa).

The tat-type signal signal peptide spans 1 to 31 (MHNIHRRHFLKAAGAVTAGLVTANIALNANA). NAD(+) contacts are provided by residues 64–65 (ER), Asp-86, 135–138 (WEWH), 155–156 (EV), and Asn-184. Residues Tyr-213, Arg-232, 244–247 (YPTH), and Tyr-326 contribute to the substrate site. Tyr-244 is a binding site for NAD(+).

Belongs to the Gfo/Idh/MocA family. Glycosyl hydrolase 109 subfamily. It depends on NAD(+) as a cofactor. In terms of processing, predicted to be exported by the Tat system. The position of the signal peptide cleavage has not been experimentally proven.

Glycosidase. The protein is Glycosyl hydrolase family 109 protein 1 of Shewanella sp. (strain MR-7).